Reading from the N-terminus, the 598-residue chain is Urease subunit alpha (598 aa).

Residues His-141, His-143, and Lys-223 each coordinate Ni(2+). Lys-223 carries the N6-carboxylysine modification. Residue His-225 participates in substrate binding. Positions 252 and 278 each coordinate Ni(2+). The active-site Proton donor is His-326. Asp-366 contacts Ni(2+).

It belongs to the metallo-dependent hydrolases superfamily. Urease alpha subunit family. Heterotrimer of UreA (gamma), UreB (beta) and UreC (alpha) subunits. Three heterotrimers associate to form the active enzyme. It depends on Ni cation as a cofactor. In terms of processing, carboxylation allows a single lysine to coordinate two nickel ions.

It is found in the cytoplasm. The catalysed reaction is urea + 2 H2O + H(+) = hydrogencarbonate + 2 NH4(+). It functions in the pathway nitrogen metabolism; urea degradation; CO(2) and NH(3) from urea (urease route): step 1/1. In Ureaplasma parvum serovar 3 (strain ATCC 27815 / 27 / NCTC 11736), this protein is Urease subunit alpha.